The sequence spans 347 residues: Ribosomal RNA large subunit methyltransferase M (347 aa).

Residues serine 184, 217–220 (APGG), aspartate 236, aspartate 256, and aspartate 272 each bind S-adenosyl-L-methionine. The active-site Proton acceptor is the lysine 301.

Belongs to the class I-like SAM-binding methyltransferase superfamily. RNA methyltransferase RlmE family. RlmM subfamily. As to quaternary structure, monomer.

The protein resides in the cytoplasm. It carries out the reaction cytidine(2498) in 23S rRNA + S-adenosyl-L-methionine = 2'-O-methylcytidine(2498) in 23S rRNA + S-adenosyl-L-homocysteine + H(+). Functionally, catalyzes the 2'-O-methylation at nucleotide C2498 in 23S rRNA. The protein is Ribosomal RNA large subunit methyltransferase M of Xanthomonas euvesicatoria pv. vesicatoria (strain 85-10) (Xanthomonas campestris pv. vesicatoria).